The sequence spans 223 residues: Putative 3-methyladenine DNA glycosylase (223 aa).

This sequence belongs to the DNA glycosylase MPG family.

The chain is Putative 3-methyladenine DNA glycosylase from Rickettsia typhi (strain ATCC VR-144 / Wilmington).